The following is a 113-amino-acid chain: UPF0342 protein spyM18_0873 (113 aa).

It belongs to the UPF0342 family.

The chain is UPF0342 protein spyM18_0873 from Streptococcus pyogenes serotype M18 (strain MGAS8232).